Reading from the N-terminus, the 135-residue chain is Small ribosomal subunit protein uS17 (135 aa).

The segment at 1–59 (MAEAKTGAKAAPRVAKAAKAAPKKAAPNDAEAIGAANAANVKGPKHTPRTPKPRGRRKT) is disordered. The span at 8–42 (AKAAPRVAKAAKAAPKKAAPNDAEAIGAANAANVK) shows a compositional bias: low complexity. Over residues 43–59 (GPKHTPRTPKPRGRRKT) the composition is skewed to basic residues.

Belongs to the universal ribosomal protein uS17 family. In terms of assembly, part of the 30S ribosomal subunit.

Its function is as follows. One of the primary rRNA binding proteins, it binds specifically to the 5'-end of 16S ribosomal RNA. The protein is Small ribosomal subunit protein uS17 of Mycobacterium bovis (strain ATCC BAA-935 / AF2122/97).